We begin with the raw amino-acid sequence, 1126 residues long: NUT family member 1 (1126 aa).

7 disordered regions span residues 1–56, 334–367, 475–515, 537–559, 664–692, 755–810, and 932–1014; these read MASD…PVFS, IPKKAASKTRAPRRRQRKPQRPPVPEAPKEIPPE, EDAQ…QGAA, QEQTLGGPAGIHKDGNNLPSPSS, AGMLTRGREPPSVVSQKGSSRAVRGDDRG, ALNS…GPGL, and GEGR…EELS. Over residues 30–55 the composition is skewed to pro residues; sequence FAPPPPVPPDQPLWEPSPQPPIPPVF. Residues 338–353 show a composition bias toward basic residues; it reads AASKTRAPRRRQRKPQ. Residues 962 to 975 show a composition bias toward polar residues; it reads KLTNGQGQGSTSPR. Serine 973 is subject to Phosphoserine. The segment covering 987–1005 has biased composition (basic and acidic residues); sequence TPIKEKCTSADRAKRRETE. Phosphoserine is present on residues serine 1022, serine 1025, and serine 1027. Residues 1032 to 1126 form a disordered region; that stretch reads PLSTRQASGG…SKRKKRRRSQ (95 aa). Glutamine 1042 bears the N5-methylglutamine mark. Residues 1106–1126 are compositionally biased toward basic residues; it reads PRKRRRDGFVTSKRKKRRRSQ.

It belongs to the NUT family. Methylated at Gln-1042 by N6AMT1. Post-translationally, phosphorylation on Ser-1022, Ser-1025 or Ser-1027 is important for cytoplasmic export.

Its subcellular location is the cytoplasm. The protein resides in the nucleus. Its function is as follows. Plays a role in the regulation of proliferation. Regulates TERT expression by modulating SP1 binding to TERT promoter binding sites. The chain is NUT family member 1 from Mus musculus (Mouse).